The following is a 293-amino-acid chain: ELMO domain-containing protein 2 (293 aa).

In terms of domain architecture, ELMO spans 126–282 (QHEKLLIKLW…KFHEKIKGLL (157 aa)).

In terms of biological role, acts as a GTPase-activating protein (GAP) toward guanine nucleotide exchange factors like ARL2, ARL3, ARF1 and ARF6, but not for GTPases outside the Arf family. The protein is ELMO domain-containing protein 2 (ELMOD2) of Bos taurus (Bovine).